The sequence spans 65 residues: Large ribosomal subunit protein bL35 (65 aa).

A compositionally biased stretch (basic residues) spans 1–15; it reads MPKMKTKKSAAKRFQ. The segment at 1–26 is disordered; the sequence is MPKMKTKKSAAKRFQVRGSGSIKRGQ.

The protein belongs to the bacterial ribosomal protein bL35 family.

The sequence is that of Large ribosomal subunit protein bL35 from Bordetella avium (strain 197N).